A 311-amino-acid polypeptide reads, in one-letter code: Methionyl-tRNA formyltransferase (311 aa).

117–120 (SLLP) provides a ligand contact to (6S)-5,6,7,8-tetrahydrofolate.

This sequence belongs to the Fmt family.

The catalysed reaction is L-methionyl-tRNA(fMet) + (6R)-10-formyltetrahydrofolate = N-formyl-L-methionyl-tRNA(fMet) + (6S)-5,6,7,8-tetrahydrofolate + H(+). Functionally, attaches a formyl group to the free amino group of methionyl-tRNA(fMet). The formyl group appears to play a dual role in the initiator identity of N-formylmethionyl-tRNA by promoting its recognition by IF2 and preventing the misappropriation of this tRNA by the elongation apparatus. In Bordetella avium (strain 197N), this protein is Methionyl-tRNA formyltransferase.